An 881-amino-acid chain; its full sequence is Armadillo repeat-containing protein 3 (881 aa).

12 ARM repeats span residues 15–54, 57–96, 98–138, 140–179, 181–220, 222–262, 264–304, 306–345, 346–385, 388–427, 429–468, and 470–509; these read DVFD…KFAL, EENK…ILAS, SDVK…NMSV, YTGK…NLVQ, FQCR…VITC, KEAR…NCLE, MDTM…KAAY, PENR…ALCE, NLSC…NLTT, PANA…NMAT, EPLR…ATAC, and VEAR…VCAG. S-palmitoyl cysteine attachment occurs at residues cysteine 507 and cysteine 518. A disordered region spans residues 605–659; it reads NNKSDTSPPPSMEDKSSDVGYGRSISSSSSLRRGSKEKANAIFGSPTEEKSEPAS. The span at 622-636 shows a compositional bias: low complexity; the sequence is DVGYGRSISSSSSLR.

As to quaternary structure, homodimer. Interacts with PIK3C3, PIK3R4 and BECN1. Interacts (via ARM domains) with ATG14. In terms of processing, palmitoylation is important for its function in autophagy. As to expression, testis-specific.

Its function is as follows. Essential for male fertility and sperm motility. During spermatogenesis, promotes the autophagic degradation of excessive ribosomes, providing energy resources for mitochondria and thus ensuring sperm flagellar motility. The sequence is that of Armadillo repeat-containing protein 3 (Armc3) from Mus musculus (Mouse).